The sequence spans 42 residues: Potassium channel toxin gamma-KTx 1.10 (42 aa).

4 disulfide bridges follow: C5–C23, C11–C34, C20–C39, and C24–C41.

Expressed by the venom gland.

It localises to the secreted. Its function is as follows. Blocks human Kv11.1/KCNH2/ERG1 potassium channels (reversible, IC(50)=3.4 nM). At high toxin concentrations, block of Kv11.1/KCNH2/ERG1 macroscopic current is almost complete. Does not accelerate the kinetics of the closing process and has no effect on the activation and inactivation kinetics of the Kv11.1/KCNH2/ERG1 channels. This chain is Potassium channel toxin gamma-KTx 1.10, found in Centruroides margaritatus (Central American bark Scorpion).